A 181-amino-acid chain; its full sequence is Large ribosomal subunit protein uL5 (181 aa).

It belongs to the universal ribosomal protein uL5 family. As to quaternary structure, part of the 50S ribosomal subunit; contacts the 5S rRNA and probably tRNA. Forms a bridge to the 30S subunit in the 70S ribosome.

Functionally, this is one of the proteins that bind and probably mediate the attachment of the 5S RNA into the large ribosomal subunit, where it forms part of the central protuberance. In the 70S ribosome it contacts protein S13 of the 30S subunit (bridge B1b), connecting the 2 subunits; this bridge is implicated in subunit movement. May contact the P site tRNA; the 5S rRNA and some of its associated proteins might help stabilize positioning of ribosome-bound tRNAs. This Methanococcus maripaludis (strain DSM 14266 / JCM 13030 / NBRC 101832 / S2 / LL) protein is Large ribosomal subunit protein uL5.